Here is a 399-residue protein sequence, read N- to C-terminus: Probable peptidoglycan glycosyltransferase FtsW (399 aa).

9 helical membrane passes run proline 19–serine 39, isoleucine 61–tryptophan 81, serine 85–glycine 105, tryptophan 114–alanine 134, valine 160–leucine 180, phenylalanine 198–tyrosine 218, leucine 285–isoleucine 305, methionine 314–isoleucine 334, and leucine 350–isoleucine 370.

This sequence belongs to the SEDS family. FtsW subfamily.

The protein localises to the cell inner membrane. It carries out the reaction [GlcNAc-(1-&gt;4)-Mur2Ac(oyl-L-Ala-gamma-D-Glu-L-Lys-D-Ala-D-Ala)](n)-di-trans,octa-cis-undecaprenyl diphosphate + beta-D-GlcNAc-(1-&gt;4)-Mur2Ac(oyl-L-Ala-gamma-D-Glu-L-Lys-D-Ala-D-Ala)-di-trans,octa-cis-undecaprenyl diphosphate = [GlcNAc-(1-&gt;4)-Mur2Ac(oyl-L-Ala-gamma-D-Glu-L-Lys-D-Ala-D-Ala)](n+1)-di-trans,octa-cis-undecaprenyl diphosphate + di-trans,octa-cis-undecaprenyl diphosphate + H(+). It participates in cell wall biogenesis; peptidoglycan biosynthesis. Functionally, peptidoglycan polymerase that is essential for cell division. The polypeptide is Probable peptidoglycan glycosyltransferase FtsW (Marinobacter nauticus (strain ATCC 700491 / DSM 11845 / VT8) (Marinobacter aquaeolei)).